Consider the following 301-residue polypeptide: Probable alpha-L-glutamate ligase (301 aa).

One can recognise an ATP-grasp domain in the interval 104–287; the sequence is LQLMSRKGLG…VASMIIKHIE (184 aa). Residues K141, 178–179, D187, and 211–213 each bind ATP; these read EY and RSN. Positions 248, 260, and 262 each coordinate Mg(2+). Residues D248, E260, and N262 each coordinate Mn(2+).

The protein belongs to the RimK family. Mg(2+) serves as cofactor. It depends on Mn(2+) as a cofactor.

The chain is Probable alpha-L-glutamate ligase from Marinomonas sp. (strain MWYL1).